A 60-amino-acid polypeptide reads, in one-letter code: DNA-directed RNA polymerase subunit Rpo6 (60 aa).

This sequence belongs to the archaeal Rpo6/eukaryotic RPB6 RNA polymerase subunit family. In terms of assembly, part of the RNA polymerase complex.

Its subcellular location is the cytoplasm. It catalyses the reaction RNA(n) + a ribonucleoside 5'-triphosphate = RNA(n+1) + diphosphate. In terms of biological role, DNA-dependent RNA polymerase (RNAP) catalyzes the transcription of DNA into RNA using the four ribonucleoside triphosphates as substrates. This is DNA-directed RNA polymerase subunit Rpo6 from Methanosarcina acetivorans (strain ATCC 35395 / DSM 2834 / JCM 12185 / C2A).